The sequence spans 195 residues: Imidazoleglycerol-phosphate dehydratase (195 aa).

Belongs to the imidazoleglycerol-phosphate dehydratase family.

Its subcellular location is the cytoplasm. It carries out the reaction D-erythro-1-(imidazol-4-yl)glycerol 3-phosphate = 3-(imidazol-4-yl)-2-oxopropyl phosphate + H2O. It functions in the pathway amino-acid biosynthesis; L-histidine biosynthesis; L-histidine from 5-phospho-alpha-D-ribose 1-diphosphate: step 6/9. This is Imidazoleglycerol-phosphate dehydratase from Parafrankia sp. (strain EAN1pec).